The chain runs to 312 residues: Serine/threonine-protein phosphatase PP1 isozyme 5 (312 aa).

The residue at position 2 (Ala2) is an N-acetylalanine. Mn(2+)-binding residues include Asp70, His72, Asp98, and Asn130. His131 (proton donor) is an active-site residue. The Mn(2+) site is built by His179 and His254.

This sequence belongs to the PPP phosphatase family. PP-1 subfamily. The cofactor is Mn(2+).

It localises to the nucleus. The protein resides in the cytoplasm. It catalyses the reaction O-phospho-L-seryl-[protein] + H2O = L-seryl-[protein] + phosphate. The enzyme catalyses O-phospho-L-threonyl-[protein] + H2O = L-threonyl-[protein] + phosphate. Phosphatase activity is strongly reduced by the protein phosphatase inhibitor 2 (I-2). Functionally, serine/threonine-protein phosphatase that possesses phosphatase activity toward para-nitrophenyl phosphate (pNPP) in vitro. This Arabidopsis thaliana (Mouse-ear cress) protein is Serine/threonine-protein phosphatase PP1 isozyme 5.